The chain runs to 132 residues: Small ribosomal subunit protein uS8 (132 aa).

This sequence belongs to the universal ribosomal protein uS8 family. As to quaternary structure, part of the 30S ribosomal subunit. Contacts proteins S5 and S12.

Functionally, one of the primary rRNA binding proteins, it binds directly to 16S rRNA central domain where it helps coordinate assembly of the platform of the 30S subunit. In Caldicellulosiruptor bescii (strain ATCC BAA-1888 / DSM 6725 / KCTC 15123 / Z-1320) (Anaerocellum thermophilum), this protein is Small ribosomal subunit protein uS8.